Here is a 405-residue protein sequence, read N- to C-terminus: Type II secretion system protein F (405 aa).

The Cytoplasmic segment spans residues 1-168 (MAAFEYLALD…QRQQSRQKIQ (168 aa)). Ca(2+) is bound by residues T97, E151, and D155. Residues 169-189 (LALLYPVILMVASLAIVGFLL) form a helical membrane-spanning segment. Over 190 to 219 (GYVVPDVVRVFIDSGQTLPLLTRVLIGVSD) the chain is Periplasmic. Residues 220-239 (WVKAWGALAFVAAIGGVIGF) form a helical membrane-spanning segment. Topologically, residues 240-376 (RYALRKDAFR…IGLMVGLFEP (137 aa)) are cytoplasmic. The helical transmembrane segment at 377–397 (FMLIFMGAVVLVIVLAILLPI) threads the bilayer. Residues 398 to 405 (LSLNQLVG) lie on the Periplasmic side of the membrane.

It belongs to the GSP F family. As to quaternary structure, type II secretion system is composed of four main components: the outer membrane complex, the inner membrane complex, the cytoplasmic secretion ATPase and the periplasm-spanning pseudopilus. Homodimer. Interacts with XcpR/GspE and XcpY/GspL components.

Its subcellular location is the cell inner membrane. Its function is as follows. Component of the type II secretion system inner membrane complex required for the energy-dependent secretion of extracellular factors such as proteases and toxins from the periplasm. This chain is Type II secretion system protein F (xcpS), found in Pseudomonas aeruginosa (strain ATCC 15692 / DSM 22644 / CIP 104116 / JCM 14847 / LMG 12228 / 1C / PRS 101 / PAO1).